We begin with the raw amino-acid sequence, 104 residues long: L-rhamnose mutarotase (104 aa).

Tyr-18 contacts substrate. His-22 serves as the catalytic Proton donor. Residues Tyr-41 and 76–77 (WW) each bind substrate.

The protein belongs to the rhamnose mutarotase family. Homodimer.

It localises to the cytoplasm. It carries out the reaction alpha-L-rhamnose = beta-L-rhamnose. It participates in carbohydrate metabolism; L-rhamnose metabolism. Involved in the anomeric conversion of L-rhamnose. This chain is L-rhamnose mutarotase, found in Escherichia coli O7:K1 (strain IAI39 / ExPEC).